The sequence spans 323 residues: Arginase-1 (323 aa).

Residues 1-27 (MSSKPKSLEIIGAPFSKGQPRGGVEKG) are disordered. The residue at position 7 (Ser-7) is a Phosphoserine. Lys-17 carries the post-translational modification N6-succinyllysine. Phosphoserine is present on residues Ser-62 and Ser-72. An N6-succinyllysine modification is found at Lys-75. Residues His-101, Asp-124, His-126, and Asp-128 each contribute to the Mn(2+) site. Residues 126-130 (HTDIN) and 137-139 (SGN) each bind substrate. Ser-163 is subject to Phosphoserine. Asp-183 is a binding site for substrate. At Ser-217 the chain carries Phosphoserine. Positions 232 and 234 each coordinate Mn(2+). Residues Thr-246 and Glu-277 each contribute to the substrate site. The residue at position 281 (Thr-281) is a Phosphothreonine.

Belongs to the arginase family. In terms of assembly, homotrimer. Interacts with CMTM6. Mn(2+) serves as cofactor. In terms of tissue distribution, expressed in macrophages. Expressed in precursor and mature group 2 innate lymphoid cells (ILC2s). Expressed in lung tumor-associated myeloid cells. Expressed in lung tumor-infiltrating dendritic cells.

The protein localises to the cytoplasm. It localises to the cytoplasmic granule. The catalysed reaction is L-arginine + H2O = urea + L-ornithine. It participates in nitrogen metabolism; urea cycle; L-ornithine and urea from L-arginine: step 1/1. Its function is as follows. Key element of the urea cycle converting L-arginine to urea and L-ornithine, which is further metabolized into metabolites proline and polyamides that drive collagen synthesis and bioenergetic pathways critical for cell proliferation, respectively; the urea cycle takes place primarily in the liver and, to a lesser extent, in the kidneys. Functions in L-arginine homeostasis in nonhepatic tissues characterized by the competition between nitric oxide synthase (NOS) and arginase for the available intracellular substrate arginine. Arginine metabolism is a critical regulator of innate and adaptive immune responses. Involved in an antimicrobial effector pathway in polymorphonuclear granulocytes (PMN). Upon PMN cell death is liberated from the phagolysosome and depletes arginine in the microenvironment leading to suppressed T cell and natural killer (NK) cell proliferation and cytokine secretion. In group 2 innate lymphoid cells (ILC2s) promotes acute type 2 inflammation in the lung and is involved in optimal ILC2 proliferation but not survival. Plays a role in the immune response of alternatively activated or M2 macrophages in processes such as wound healing and tissue regeneration, immune defense against multicellular pathogens and parasites, and immune suppression and allergic inflammation; the regulatory outcome seems to be organ specific. In tumor-infiltrating dendritic cells (DCs) and myeloid-derived suppressor cells (MDSCs) plays a role in suppression of T cell-mediated antitumor immunity. The chain is Arginase-1 (Arg1) from Mus musculus (Mouse).